We begin with the raw amino-acid sequence, 335 residues long: Fructose-1,6-bisphosphatase class 1 (335 aa).

Glutamate 92, aspartate 114, leucine 116, and aspartate 117 together coordinate Mg(2+). Residues 117–120, asparagine 209, and lysine 275 contribute to the substrate site; that span reads DGSS. Glutamate 281 lines the Mg(2+) pocket.

It belongs to the FBPase class 1 family. As to quaternary structure, homotetramer. Requires Mg(2+) as cofactor.

Its subcellular location is the cytoplasm. It carries out the reaction beta-D-fructose 1,6-bisphosphate + H2O = beta-D-fructose 6-phosphate + phosphate. It participates in carbohydrate biosynthesis; gluconeogenesis. This is Fructose-1,6-bisphosphatase class 1 from Verminephrobacter eiseniae (strain EF01-2).